Consider the following 304-residue polypeptide: Small glutamine-rich tetratricopeptide repeat-containing protein beta (304 aa).

TPR repeat units follow at residues 15–49, 85–118, 120–152, and 153–186; these read LREQSQMDAYTSDEQESLEVAIQCLETVFKISPED, ADQLKDEGNNHMKEENYAAAVDCYTQAIELDPNN, VYYCNRAAAQSKLSHYTDAIKDCEKAIAIDSKY, and SKAYGRMGLALTAMNKFEEAVTSYQKALDLDPEN. At lysine 131 the chain carries N6-acetyllysine. A phosphoserine mark is found at serine 293, serine 295, and serine 297.

Belongs to the SGT family. Homooligomerize.

Its function is as follows. Co-chaperone that binds directly to HSC70 and HSP70 and regulates their ATPase activity. The chain is Small glutamine-rich tetratricopeptide repeat-containing protein beta (Sgtb) from Mus musculus (Mouse).